We begin with the raw amino-acid sequence, 177 residues long: ATP synthase subunit delta (177 aa).

The protein belongs to the ATPase delta chain family. As to quaternary structure, F-type ATPases have 2 components, F(1) - the catalytic core - and F(0) - the membrane proton channel. F(1) has five subunits: alpha(3), beta(3), gamma(1), delta(1), epsilon(1). F(0) has three main subunits: a(1), b(2) and c(10-14). The alpha and beta chains form an alternating ring which encloses part of the gamma chain. F(1) is attached to F(0) by a central stalk formed by the gamma and epsilon chains, while a peripheral stalk is formed by the delta and b chains.

The protein localises to the cell inner membrane. Functionally, f(1)F(0) ATP synthase produces ATP from ADP in the presence of a proton or sodium gradient. F-type ATPases consist of two structural domains, F(1) containing the extramembraneous catalytic core and F(0) containing the membrane proton channel, linked together by a central stalk and a peripheral stalk. During catalysis, ATP synthesis in the catalytic domain of F(1) is coupled via a rotary mechanism of the central stalk subunits to proton translocation. Its function is as follows. This protein is part of the stalk that links CF(0) to CF(1). It either transmits conformational changes from CF(0) to CF(1) or is implicated in proton conduction. This chain is ATP synthase subunit delta, found in Azobacteroides pseudotrichonymphae genomovar. CFP2.